A 453-amino-acid polypeptide reads, in one-letter code: uncharacterized protein (453 aa).

Disordered regions lie at residues Gly-183–Ser-210 and Pro-428–Lys-453. Positions Thr-198–Arg-207 are enriched in basic residues. The span at His-433–Lys-453 shows a compositional bias: polar residues.

This is an uncharacterized protein from Saccharomyces cerevisiae (strain ATCC 204508 / S288c) (Baker's yeast).